Reading from the N-terminus, the 690-residue chain is Glycine--tRNA ligase 1, mitochondrial (690 aa).

Residues 1–24 (MSFFNISRRFYSQIVKKSVKIKRM) constitute a mitochondrion transit peptide. The residue at position 25 (Ser-25) is an N-acetylserine. At Ser-226 the chain carries Phosphoserine. A glycine-binding site is contributed by Glu-251. ATP-binding positions include 283 to 285 (RNE) and 294 to 295 (RV). Residue Glu-302 participates in glycine binding. An ATP-binding site is contributed by 410-411 (EC). Residues Ser-476 and Ser-528 each carry the phosphoserine modification. Residue 531–533 (EPS) coordinates glycine. An ATP-binding site is contributed by Arg-538. At Thr-689 the chain carries Phosphothreonine.

The protein belongs to the class-II aminoacyl-tRNA synthetase family. In terms of assembly, homodimer.

The protein localises to the cytoplasm. It is found in the mitochondrion matrix. It catalyses the reaction tRNA(Gly) + glycine + ATP = glycyl-tRNA(Gly) + AMP + diphosphate. The catalysed reaction is 2 ATP + H(+) = P(1),P(4)-bis(5'-adenosyl) tetraphosphate + diphosphate. Functionally, catalyzes the ATP-dependent ligation of glycine to the 3'-end of its cognate tRNA, via the formation of an aminoacyl-adenylate intermediate (Gly-AMP). Also produces diadenosine tetraphosphate (Ap4A), a universal pleiotropic signaling molecule needed for cell regulation pathways, by direct condensation of 2 ATPs. Thereby, may play a special role in Ap4A homeostasis. This Saccharomyces cerevisiae (strain ATCC 204508 / S288c) (Baker's yeast) protein is Glycine--tRNA ligase 1, mitochondrial (GRS1).